Consider the following 629-residue polypeptide: tRNA uridine 5-carboxymethylaminomethyl modification enzyme MnmG (629 aa).

FAD contacts are provided by residues 13-18 (GGGHAG), V125, and S180. 273-287 (GPRYCPSIEDKVMRF) serves as a coordination point for NAD(+). An FAD-binding site is contributed by Q370.

The protein belongs to the MnmG family. As to quaternary structure, homodimer. Heterotetramer of two MnmE and two MnmG subunits. The cofactor is FAD.

It localises to the cytoplasm. Functionally, NAD-binding protein involved in the addition of a carboxymethylaminomethyl (cmnm) group at the wobble position (U34) of certain tRNAs, forming tRNA-cmnm(5)s(2)U34. The protein is tRNA uridine 5-carboxymethylaminomethyl modification enzyme MnmG of Escherichia coli O45:K1 (strain S88 / ExPEC).